A 253-amino-acid chain; its full sequence is Uridylate kinase (253 aa).

Residue 26–29 participates in ATP binding; it reads KLSG. Position 68 (Gly68) interacts with UMP. Gly69 and Arg73 together coordinate ATP. UMP contacts are provided by residues Asp88 and 149–156; that span reads TGNPFFTT. ATP contacts are provided by Thr176, Tyr182, and Asp185.

The protein belongs to the UMP kinase family. In terms of assembly, homohexamer.

It is found in the cytoplasm. It catalyses the reaction UMP + ATP = UDP + ADP. It participates in pyrimidine metabolism; CTP biosynthesis via de novo pathway; UDP from UMP (UMPK route): step 1/1. Its activity is regulated as follows. Inhibited by UTP. Catalyzes the reversible phosphorylation of UMP to UDP. In Chromohalobacter salexigens (strain ATCC BAA-138 / DSM 3043 / CIP 106854 / NCIMB 13768 / 1H11), this protein is Uridylate kinase.